A 398-amino-acid chain; its full sequence is Argininosuccinate synthase (398 aa).

An ATP-binding site is contributed by A8–S16. Position 87 (Y87) interacts with L-citrulline. G117 provides a ligand contact to ATP. Positions 119, 123, and 124 each coordinate L-aspartate. Position 123 (N123) interacts with L-citrulline. R127, S175, E260, and Y272 together coordinate L-citrulline.

Belongs to the argininosuccinate synthase family. Type 1 subfamily. As to quaternary structure, homotetramer.

Its subcellular location is the cytoplasm. The catalysed reaction is L-citrulline + L-aspartate + ATP = 2-(N(omega)-L-arginino)succinate + AMP + diphosphate + H(+). It participates in amino-acid biosynthesis; L-arginine biosynthesis; L-arginine from L-ornithine and carbamoyl phosphate: step 2/3. This is Argininosuccinate synthase from Mycobacterium avium (strain 104).